A 222-amino-acid polypeptide reads, in one-letter code: MSSLSKEAVLVHEALVARGLETPMRAPVQEIDNETRKRLITGHMTEIMQLLNLDLSDDSLMETPHRIAKMYVDEIFSGLDYSRFPKITVIENKMKVDEMVTVRDITLTSTCEHHFVTIDGKATVAYIPKDSVIGLSKINRIVQFFAQRPQVQERLTQQILIALQTLLGTNNVAVSIDAVHYCVKARGIRDATSATTTTSLGGLFKSSQNTRQEFLRAVRHHD.

C111, H114, and C182 together coordinate Zn(2+).

Belongs to the GTP cyclohydrolase I family. As to quaternary structure, toroid-shaped homodecamer, composed of two pentamers of five dimers.

The enzyme catalyses GTP + H2O = 7,8-dihydroneopterin 3'-triphosphate + formate + H(+). It functions in the pathway cofactor biosynthesis; 7,8-dihydroneopterin triphosphate biosynthesis; 7,8-dihydroneopterin triphosphate from GTP: step 1/1. This Klebsiella pneumoniae subsp. pneumoniae (strain ATCC 700721 / MGH 78578) protein is GTP cyclohydrolase 1.